Reading from the N-terminus, the 35-residue chain is RCHFVVCTTDCRRNSPGTYGECVKKEKGKECVCKS.

Disulfide bonds link Cys-2–Cys-22, Cys-7–Cys-31, and Cys-11–Cys-33.

In terms of tissue distribution, expressed by the venom gland.

The protein resides in the secreted. Its function is as follows. Blocks Kv1.6/KCNA6 potassium channels. This is Tamulustoxin from Hottentotta tamulus (Eastern Indian scorpion).